We begin with the raw amino-acid sequence, 447 residues long: Probable glycine dehydrogenase (decarboxylating) subunit 1 (447 aa).

The protein belongs to the GcvP family. N-terminal subunit subfamily. In terms of assembly, the glycine cleavage system is composed of four proteins: P, T, L and H. In this organism, the P 'protein' is a heterodimer of two subunits.

The catalysed reaction is N(6)-[(R)-lipoyl]-L-lysyl-[glycine-cleavage complex H protein] + glycine + H(+) = N(6)-[(R)-S(8)-aminomethyldihydrolipoyl]-L-lysyl-[glycine-cleavage complex H protein] + CO2. Functionally, the glycine cleavage system catalyzes the degradation of glycine. The P protein binds the alpha-amino group of glycine through its pyridoxal phosphate cofactor; CO(2) is released and the remaining methylamine moiety is then transferred to the lipoamide cofactor of the H protein. The protein is Probable glycine dehydrogenase (decarboxylating) subunit 1 of Halalkalibacterium halodurans (strain ATCC BAA-125 / DSM 18197 / FERM 7344 / JCM 9153 / C-125) (Bacillus halodurans).